The primary structure comprises 239 residues: Ribosomal RNA small subunit methyltransferase G (239 aa).

S-adenosyl-L-methionine-binding positions include Gly-78, Phe-83, 129–130 (AE), and Arg-148.

Belongs to the methyltransferase superfamily. RNA methyltransferase RsmG family.

The protein resides in the cytoplasm. Functionally, specifically methylates the N7 position of a guanine in 16S rRNA. The sequence is that of Ribosomal RNA small subunit methyltransferase G from Desulfitobacterium hafniense (strain Y51).